Consider the following 504-residue polypeptide: UDP-GalNAc:beta-1,3-N-acetylgalactosaminyltransferase 2 (504 aa).

Topologically, residues 1 to 3 (MRN) are cytoplasmic. The helical; Signal-anchor for type II membrane protein transmembrane segment at 4–24 (WLVLLCPCVLGAALHLWHLWL) threads the bilayer. The Lumenal segment spans residues 25–504 (RSPPDPHNTG…DPCQCEAKVR (480 aa)). 2 N-linked (GlcNAc...) asparagine glycosylation sites follow: Asn-117 and Asn-176.

This sequence belongs to the glycosyltransferase 31 family. In terms of processing, N-glycosylated. As to expression, present in testis (at protein level). In testis, it is mainly detected in the middle layers of seminiferous tubules at stages XII to II. Strongly expressed in primary and secondary spermatocytes and early round spermatids, but not in spermatogonia, elongating or elongated spermatids, or in Leydig or Sertoli cells.

It is found in the golgi apparatus membrane. It localises to the endoplasmic reticulum. It carries out the reaction 3-O-(N-acetyl-beta-D-glucosaminyl-(1-&gt;4)-alpha-D-mannosyl)-L-threonyl-[protein] + UDP-N-acetyl-alpha-D-galactosamine = 3-O-[beta-D-GalNAc-(1-&gt;3)-beta-D-GlcNAc-(1-&gt;4)-alpha-D-Man]-L-Thr-[protein] + UDP + H(+). It functions in the pathway protein modification; protein glycosylation. In terms of biological role, beta-1,3-N-acetylgalactosaminyltransferase that synthesizes a unique carbohydrate structure, GalNAc-beta-1-3GlcNAc, on N- and O-glycans. Has no galactose nor galactosaminyl transferase activity toward any acceptor substrate. Involved in alpha-dystroglycan (DAG1) glycosylation: acts coordinately with GTDC2/POMGnT2 to synthesize a GalNAc-beta3-GlcNAc-beta-terminus at the 4-position of protein O-mannose in the biosynthesis of the phosphorylated O-mannosyl trisaccharide (N-acetylgalactosamine-beta-3-N-acetylglucosamine-beta-4-(phosphate-6-)mannose), a carbohydrate structure present in alpha-dystroglycan, which is required for binding laminin G-like domain-containing extracellular proteins with high affinity. This Mus musculus (Mouse) protein is UDP-GalNAc:beta-1,3-N-acetylgalactosaminyltransferase 2 (B3galnt2).